The primary structure comprises 401 residues: Protein-glutamate methylesterase/protein-glutamine glutaminase (401 aa).

One can recognise a Response regulatory domain in the interval 16-134; sequence RVLVIDDSAV…LAGAEEFRRD (119 aa). At Asp67 the chain carries 4-aspartylphosphate. The tract at residues 146 to 208 is disordered; sequence PIPPVPTQRD…PQGRGTPRNT (63 aa). Low complexity-rich tracts occupy residues 166–176 and 185–199; these read AAPGAPVARSI and SAPA…AQPP. In terms of domain architecture, CheB-type methylesterase spans 205–400; the sequence is PRNTARPEII…PGIVRRAKGG (196 aa). Active-site residues include Ser219, His246, and Asp342.

The protein belongs to the CheB family. In terms of processing, phosphorylated by CheA. Phosphorylation of the N-terminal regulatory domain activates the methylesterase activity.

The protein localises to the cytoplasm. The catalysed reaction is [protein]-L-glutamate 5-O-methyl ester + H2O = L-glutamyl-[protein] + methanol + H(+). The enzyme catalyses L-glutaminyl-[protein] + H2O = L-glutamyl-[protein] + NH4(+). Functionally, involved in chemotaxis. Part of a chemotaxis signal transduction system that modulates chemotaxis in response to various stimuli. Catalyzes the demethylation of specific methylglutamate residues introduced into the chemoreceptors (methyl-accepting chemotaxis proteins or MCP) by CheR. Also mediates the irreversible deamidation of specific glutamine residues to glutamic acid. This chain is Protein-glutamate methylesterase/protein-glutamine glutaminase, found in Maricaulis maris (strain MCS10) (Caulobacter maris).